The following is a 123-amino-acid chain: Ribosome-binding factor A (123 aa).

This sequence belongs to the RbfA family. As to quaternary structure, monomer. Binds 30S ribosomal subunits, but not 50S ribosomal subunits or 70S ribosomes.

The protein localises to the cytoplasm. Functionally, one of several proteins that assist in the late maturation steps of the functional core of the 30S ribosomal subunit. Associates with free 30S ribosomal subunits (but not with 30S subunits that are part of 70S ribosomes or polysomes). Required for efficient processing of 16S rRNA. May interact with the 5'-terminal helix region of 16S rRNA. This Koribacter versatilis (strain Ellin345) protein is Ribosome-binding factor A.